Reading from the N-terminus, the 96-residue chain is Acylphosphatase (96 aa).

One can recognise an Acylphosphatase-like domain in the interval 4–96; the sequence is RCEFLIFGKV…ESLNDFEILR (93 aa). Residues R19 and N42 contribute to the active site.

This sequence belongs to the acylphosphatase family.

It catalyses the reaction an acyl phosphate + H2O = a carboxylate + phosphate + H(+). The sequence is that of Acylphosphatase (acyP) from Helicobacter hepaticus (strain ATCC 51449 / 3B1).